Here is a 308-residue protein sequence, read N- to C-terminus: Methionyl-tRNA formyltransferase (308 aa).

109–112 (SLLP) is a (6S)-5,6,7,8-tetrahydrofolate binding site.

This sequence belongs to the Fmt family.

It carries out the reaction L-methionyl-tRNA(fMet) + (6R)-10-formyltetrahydrofolate = N-formyl-L-methionyl-tRNA(fMet) + (6S)-5,6,7,8-tetrahydrofolate + H(+). Its function is as follows. Attaches a formyl group to the free amino group of methionyl-tRNA(fMet). The formyl group appears to play a dual role in the initiator identity of N-formylmethionyl-tRNA by promoting its recognition by IF2 and preventing the misappropriation of this tRNA by the elongation apparatus. The chain is Methionyl-tRNA formyltransferase from Caulobacter vibrioides (strain NA1000 / CB15N) (Caulobacter crescentus).